Here is a 578-residue protein sequence, read N- to C-terminus: MPRGLELLIAQTILQGFDAQYGRFLEVTSGAQQRFEQADWHAVQQAMKNRIHLYDHHVGLVVEQLRCITNGQSTDAEFLLRVKEHYTRLLPDYPRFEIAESFFNSVYCRLFDHRSLTPERLFIFSSQPERRFRTIPRPLAKDFYPEHGWEALLMRVLSDLPLRLPWQNKSRDINYIIRHLTETLGPENLSESHLQVANELFYRNKAAWLVGKLITPSGTLPFLLPIHQTDDGELFIDTCLTTTAEASIVFGFARSYFMVYAPLPAALVEWLREILPGKTTAELYMAIGCQKHAKTESYREYLVYLQGCNEQFIEAPGIRGMVMLVFTLPGFDRVFKVIKDRFAPQKEMSAAHVRACYQLVKEHDRVGRMADTQEFENFVLEKRHISPALMELLLQEAAEKITDLGEQIVIRHLYIERRMVPLNIWLEQVEGQQLRDAIEEYGNAIRQLAAANIFPGDMLFKNFGVTRHGRVVFYDYDEICYMTEVNFRDIPPPRYPEDELASEPWYSVSPGDVFPEEFRHWLCADPRIGPLFEEMHADLFRTDYWRALQNRIREGHVEDVYAYRRRQRFSVLYGEMLF.

ATP-binding positions include 315–321 and Lys336; that span reads APGIRGM. Asp371 is an active-site residue.

This sequence belongs to the AceK family.

The protein localises to the cytoplasm. It carries out the reaction L-seryl-[isocitrate dehydrogenase] + ATP = O-phospho-L-seryl-[isocitrate dehydrogenase] + ADP + H(+). Its function is as follows. Bifunctional enzyme which can phosphorylate or dephosphorylate isocitrate dehydrogenase (IDH) on a specific serine residue. This is a regulatory mechanism which enables bacteria to bypass the Krebs cycle via the glyoxylate shunt in response to the source of carbon. When bacteria are grown on glucose, IDH is fully active and unphosphorylated, but when grown on acetate or ethanol, the activity of IDH declines drastically concomitant with its phosphorylation. This Shigella dysenteriae serotype 1 (strain Sd197) protein is Isocitrate dehydrogenase kinase/phosphatase.